Here is a 369-residue protein sequence, read N- to C-terminus: RNA-binding protein rnp24 (369 aa).

Disordered stretches follow at residues 1–77 (MEPI…KKKE), 200–219 (TDFS…TASI), and 304–369 (RMRN…IKFD). The region spanning 105-206 (WGIWVGNLSF…KSNTDFSGRP (102 aa)) is the RRM 1 domain. Polar residues predominate over residues 209–219 (PANTLSKTASI). The region spanning 228 to 310 (SILFVGNLDF…RSKRMRNKSP (83 aa)) is the RRM 2 domain. The segment covering 325-341 (QEDKPNFKRARKIDPRS) has biased composition (basic and acidic residues). Over residues 346–357 (AALAKAQRSSAA) the composition is skewed to low complexity.

The protein resides in the nucleus. The polypeptide is RNA-binding protein rnp24 (rnp24) (Schizosaccharomyces pombe (strain 972 / ATCC 24843) (Fission yeast)).